Reading from the N-terminus, the 148-residue chain is Small ribosomal subunit protein bS16 (148 aa).

The interval 107–148 (AAARAAAGAEDRPATTPKKAKKAASADGADAPAADAPTAAGQ) is disordered. Over residues 129–148 (AASADGADAPAADAPTAAGQ) the composition is skewed to low complexity.

Belongs to the bacterial ribosomal protein bS16 family.

The protein is Small ribosomal subunit protein bS16 of Frankia alni (strain DSM 45986 / CECT 9034 / ACN14a).